The sequence spans 543 residues: Serine/threonine-protein kinase PkaA (543 aa).

One can recognise a Protein kinase domain in the interval 8–276; that stretch reads YLLEEPLGRG…ENLARGLRVV (269 aa). ATP is bound by residues 14–22 and Lys48; that span reads LGRGATGTV. Asp142 serves as the catalytic Proton acceptor. Residues 303 to 480 are disordered; the sequence is PAPAQVPGAP…RQRSANPMRI (178 aa). Residues 352–361 show a composition bias toward pro residues; the sequence is VMPPVPPGQP. Composition is skewed to low complexity over residues 407–420 and 428–451; these read RQVS…RQAP and PGYG…QPQR. Residues 452–461 show a composition bias toward pro residues; the sequence is YAPPPAPEPQ.

This sequence belongs to the protein kinase superfamily. Ser/Thr protein kinase family. In terms of processing, autophosphorylated mainly at Thr and slightly at Ser.

It catalyses the reaction L-seryl-[protein] + ATP = O-phospho-L-seryl-[protein] + ADP + H(+). The enzyme catalyses L-threonyl-[protein] + ATP = O-phospho-L-threonyl-[protein] + ADP + H(+). The chain is Serine/threonine-protein kinase PkaA (pkaA) from Streptomyces coelicolor (strain ATCC BAA-471 / A3(2) / M145).